Consider the following 636-residue polypeptide: Poly(3-hydroxyalkanoate) polymerase subunit PhaC (636 aa).

2 disordered regions span residues 1–38 and 129–152; these read MYNKRIKRVLPPEEMVTDSKQESGGQKNGDKTGFDATD and QGTRGMQGEPLPPEPDTRKDKRFS. Over residues 143 to 152 the composition is skewed to basic and acidic residues; that stretch reads PDTRKDKRFS. Residue Cys-373 is part of the active site.

This sequence belongs to the PHA/PHB synthase family. Type I PhaC subfamily.

The protein resides in the cytoplasm. It catalyses the reaction (3R)-3-hydroxybutanoyl-CoA + [(3R)-hydroxybutanoate](n) = [(3R)-hydroxybutanoate](n+1) + CoA. It functions in the pathway biopolymer metabolism; poly-(R)-3-hydroxybutanoate biosynthesis. Functionally, polymerizes D(-)-3-hydroxybutyryl-CoA to create PHB which consists of thousands of hydroxybutyrate molecules linked end to end. PHB serves as an intracellular energy reserve material when cells grow under conditions of nutrient limitation. The sequence is that of Poly(3-hydroxyalkanoate) polymerase subunit PhaC from Rhizobium etli (strain ATCC 51251 / DSM 11541 / JCM 21823 / NBRC 15573 / CFN 42).